The chain runs to 66 residues: Gallinacin-8 (66 aa).

The first 19 residues, 1–19 (MKILYLLLAVLLTVLQSSL), serve as a signal peptide directing secretion. The propeptide occupies 20–25 (GFMRVP). 3 disulfides stabilise this stretch: Cys-31/Cys-60, Cys-38/Cys-54, and Cys-43/Cys-61.

It belongs to the beta-defensin family. Expressed in the liver, kidney, gall bladder, testis, ovary and male and femae reproductive tracts. Expressed in the ovarian stroma and the theca and granulosa layers of the ovarian follicle.

The protein resides in the secreted. Its subcellular location is the cytoplasmic granule. Functionally, has bactericidal activity. In Gallus gallus (Chicken), this protein is Gallinacin-8 (GAL8).